A 38-amino-acid polypeptide reads, in one-letter code: MKVRPSVKKICDKCKVVRRRGVVRIICENPRHKQRQGN.

It belongs to the bacterial ribosomal protein bL36 family.

The sequence is that of Large ribosomal subunit protein bL36 from Sorangium cellulosum (strain So ce56) (Polyangium cellulosum (strain So ce56)).